A 583-amino-acid polypeptide reads, in one-letter code: Selenocysteine-specific elongation factor (583 aa).

Residues 5 to 203 (RVNVNVGVLG…LLKSQISIPT (199 aa)) enclose the tr-type G domain. The segment at 14 to 21 (GHIDSGKT) is G1. 3 residues coordinate GTP: Gly19, Thr21, and Ala22. Residue Thr21 participates in Mg(2+) binding. Residues 46–50 (GITLD) are G2. 2 residues coordinate Mg(2+): Thr48 and Asp78. The tract at residues 78–81 (DCPG) is G3. The interval 132–135 (NKID) is G4. Residues Asp135 and Lys173 each contribute to the GTP site. The tract at residues 171 to 173 (AAK) is G5. Positions 371 to 390 (MPTATEGDDEADPKAGHAPG) are disordered. At Ser524 the chain carries Phosphoserine. A disordered region spans residues 528 to 562 (KKILTPTLKKRSRAGRGETTKPEEGTERPEPIQPV). The residue at position 532 (Thr532) is a Phosphothreonine. The short motif at 534–540 (TLKKRSR) is the Nuclear localization signal element. Residues 542 to 557 (GRGETTKPEEGTERPE) show a composition bias toward basic and acidic residues. At Arg543 the chain carries Omega-N-methylarginine.

The protein belongs to the TRAFAC class translation factor GTPase superfamily. Classic translation factor GTPase family. SelB subfamily. It depends on Mg(2+) as a cofactor. Requires Mn(2+) as cofactor.

Its subcellular location is the cytoplasm. It is found in the nucleus. The enzyme catalyses GTP + H2O = GDP + phosphate + H(+). In terms of biological role, translation factor required for the incorporation of the rare amino acid selenocysteine encoded by UGA codons. Replaces the eRF1-eRF3-GTP ternary complex for the insertion of selenocysteine directed by the UGA codon. Insertion of selenocysteine at UGA codons is mediated by SECISBP2 and EEFSEC: SECISBP2 (1) specifically binds the SECIS sequence once the 80S ribosome encounters an in-frame UGA codon and (2) contacts the RPS27A/eS31 of the 40S ribosome before ribosome stalling. (3) GTP-bound EEFSEC then delivers selenocysteinyl-tRNA(Sec) to the 80S ribosome and adopts a preaccommodated state conformation. (4) After GTP hydrolysis, EEFSEC dissociates from the assembly, selenocysteinyl-tRNA(Sec) accommodates, and peptide bond synthesis and selenoprotein elongation occur. The polypeptide is Selenocysteine-specific elongation factor (Eefsec) (Mus musculus (Mouse)).